The sequence spans 294 residues: Ribosomal RNA small subunit methyltransferase H (294 aa).

Residues 40-42 (GGH), Asp-59, Phe-86, Asp-102, and Gln-109 each bind S-adenosyl-L-methionine.

The protein belongs to the methyltransferase superfamily. RsmH family.

It is found in the cytoplasm. It catalyses the reaction cytidine(1402) in 16S rRNA + S-adenosyl-L-methionine = N(4)-methylcytidine(1402) in 16S rRNA + S-adenosyl-L-homocysteine + H(+). Its function is as follows. Specifically methylates the N4 position of cytidine in position 1402 (C1402) of 16S rRNA. This chain is Ribosomal RNA small subunit methyltransferase H, found in Cyanothece sp. (strain PCC 7425 / ATCC 29141).